The following is a 114-amino-acid chain: Large ribosomal subunit protein bL19 (114 aa).

It belongs to the bacterial ribosomal protein bL19 family.

Functionally, this protein is located at the 30S-50S ribosomal subunit interface and may play a role in the structure and function of the aminoacyl-tRNA binding site. The polypeptide is Large ribosomal subunit protein bL19 (Bacillus cytotoxicus (strain DSM 22905 / CIP 110041 / 391-98 / NVH 391-98)).